The sequence spans 133 residues: uncharacterized protein (133 aa).

A helical membrane pass occupies residues 11 to 31 (YFLISVFLIFIVSGITYFYST).

It localises to the membrane. This is an uncharacterized protein from Borreliella burgdorferi (strain ATCC 35210 / DSM 4680 / CIP 102532 / B31) (Borrelia burgdorferi).